Here is a 242-residue protein sequence, read N- to C-terminus: MSGHSKWHNIQGRKNAQDAKRGKVFQKISRELYMAVKAGGPDPDSNAQLRLVMDKAKAANMPKDNIKRAVDKGSGSGAENYEEVTYEGYGPGGIAVLVHALTDNKNRTAAAVRSAFTHHGGALAATGAVSYMFDRKGYIVISREDLDTDEDTMLMDVLDAGGDDLQSSDEAFEIYTDPKQLAAVRDALEANGYKLETAELTMIPENLTDVPADKVEKLQHMIDELEDNDDVSEVYEAANYPD.

The segment at 1–21 (MSGHSKWHNIQGRKNAQDAKR) is disordered.

This sequence belongs to the TACO1 family.

The protein localises to the cytoplasm. The polypeptide is Probable transcriptional regulatory protein lp_2253 (Lactiplantibacillus plantarum (strain ATCC BAA-793 / NCIMB 8826 / WCFS1) (Lactobacillus plantarum)).